A 515-amino-acid chain; its full sequence is Fatty acyl-CoA reductase 2 (515 aa).

Residues 1–464 are Cytoplasmic-facing; it reads MSTIAAFYGG…KAKQRLKRLR (464 aa). The helical transmembrane segment at 465-484 threads the bilayer; sequence NIHYLFNTALFLIAWRLLIA. Topologically, residues 485-515 are peroxisomal; it reads RSQMARNVWFFIVSFCYKFLSYFRASSTLKV.

Belongs to the fatty acyl-CoA reductase family.

The protein resides in the peroxisome membrane. The catalysed reaction is a long-chain fatty acyl-CoA + 2 NADPH + 2 H(+) = a long-chain primary fatty alcohol + 2 NADP(+) + CoA. It catalyses the reaction a very long-chain fatty acyl-CoA + 2 NADPH + 2 H(+) = a very long-chain primary fatty alcohol + 2 NADP(+) + CoA. It carries out the reaction an ultra-long-chain fatty acyl-CoA + 2 NADPH + 2 H(+) = an ultra long-chain primary fatty alcohol + 2 NADP(+) + CoA. The enzyme catalyses hexadecanoyl-CoA + 2 NADPH + 2 H(+) = hexadecan-1-ol + 2 NADP(+) + CoA. The catalysed reaction is octadecanoyl-CoA + 2 NADPH + 2 H(+) = octadecan-1-ol + 2 NADP(+) + CoA. It catalyses the reaction eicosanoyl-CoA + 2 NADPH + 2 H(+) = eicosan-1-ol + 2 NADP(+) + CoA. It carries out the reaction docosanoyl-CoA + 2 NADPH + 2 H(+) = docosan-1-ol + 2 NADP(+) + CoA. The enzyme catalyses tetracosanoyl-CoA + 2 NADPH + 2 H(+) = tetracosan-1-ol + 2 NADP(+) + CoA. The catalysed reaction is hexacosanoyl-CoA + 2 NADPH + 2 H(+) = hexacosan-1-ol + 2 NADP(+) + CoA. It catalyses the reaction octacosanoyl-CoA + 2 NADPH + 2 H(+) = octacosan-1-ol + 2 NADP(+) + CoA. It carries out the reaction triacontanoyl-CoA + 2 NADPH + 2 H(+) = triacontan-1-ol + 2 NADP(+) + CoA. The enzyme catalyses 18-methylnonadecanoyl-CoA + 2 NADPH + 2 H(+) = 18-methylnonadecan-1-ol + 2 NADP(+) + CoA. The catalysed reaction is 20-methylheneicosanoyl-CoA + 2 NADPH + 2 H(+) = 20-methylheneicosan-1-ol + 2 NADP(+) + CoA. It catalyses the reaction 22-methyltricosanoyl-CoA + 2 NADPH + 2 H(+) = 22-methyltricosan-1-ol + 2 NADP(+) + CoA. It carries out the reaction 24-methylpentacosanoyl-CoA + 2 NADPH + 2 H(+) = 24-methylpentacosan-1-ol + 2 NADP(+) + CoA. Its function is as follows. Catalyzes the reduction of saturated but not unsaturated C16 or C18 fatty acyl-CoA to fatty alcohols (FAls). A lower activity can be observed with shorter fatty acyl-CoA substrates. Can produce very long-chain and ultra long-chain FAls, regardless of whether they have a straight or branched chain. Involved in the production of ether lipids/plasmalogens and wax monoesters whose synthesis requires FAls as substrates. This Homo sapiens (Human) protein is Fatty acyl-CoA reductase 2.